The sequence spans 138 residues: Transcription antitermination protein NusB (138 aa).

It belongs to the NusB family.

Its function is as follows. Involved in transcription antitermination. Required for transcription of ribosomal RNA (rRNA) genes. Binds specifically to the boxA antiterminator sequence of the ribosomal RNA (rrn) operons. The chain is Transcription antitermination protein NusB from Tolumonas auensis (strain DSM 9187 / NBRC 110442 / TA 4).